Here is a 255-residue protein sequence, read N- to C-terminus: Indole-3-glycerol phosphate synthase (255 aa).

Belongs to the TrpC family.

It catalyses the reaction 1-(2-carboxyphenylamino)-1-deoxy-D-ribulose 5-phosphate + H(+) = (1S,2R)-1-C-(indol-3-yl)glycerol 3-phosphate + CO2 + H2O. The protein operates within amino-acid biosynthesis; L-tryptophan biosynthesis; L-tryptophan from chorismate: step 4/5. The protein is Indole-3-glycerol phosphate synthase of Streptococcus sanguinis (strain SK36).